The following is a 192-amino-acid chain: GTP cyclohydrolase-2 (192 aa).

50–54 (RLHSE) is a GTP binding site. Zn(2+)-binding residues include Cys55, Cys66, and Cys68. GTP contacts are provided by residues 92–94 (EGR) and Thr114. The active-site Proton acceptor is Asp126. The active-site Nucleophile is the Arg128. Thr149 and Lys154 together coordinate GTP.

Belongs to the GTP cyclohydrolase II family. Requires Zn(2+) as cofactor.

It carries out the reaction GTP + 4 H2O = 2,5-diamino-6-hydroxy-4-(5-phosphoribosylamino)-pyrimidine + formate + 2 phosphate + 3 H(+). It functions in the pathway cofactor biosynthesis; riboflavin biosynthesis; 5-amino-6-(D-ribitylamino)uracil from GTP: step 1/4. Its function is as follows. Catalyzes the conversion of GTP to 2,5-diamino-6-ribosylamino-4(3H)-pyrimidinone 5'-phosphate (DARP), formate and pyrophosphate. The sequence is that of GTP cyclohydrolase-2 from Helicobacter acinonychis (strain Sheeba).